The following is a 461-amino-acid chain: Ornithine decarboxylase (461 aa).

Lys-69 bears the N6-(pyridoxal phosphate)lysine mark. Pyridoxal 5'-phosphate is bound by residues Ser-200, Gly-237, and 274–277; that span reads EPGR. Ser-303 carries the post-translational modification Phosphoserine; by CK2. Residue 331–332 coordinates substrate; that stretch reads YD. The active-site Proton donor; shared with dimeric partner is the Cys-360. The residue at position 360 (Cys-360) is an S-nitrosocysteine. Asp-361 lines the substrate pocket. Position 389 (Tyr-389) interacts with pyridoxal 5'-phosphate.

It belongs to the Orn/Lys/Arg decarboxylase class-II family. In terms of assembly, homodimer. Only the dimer is catalytically active, as the active sites are constructed of residues from both monomers. Does not form a heterodimer with AZIN2. Pyridoxal 5'-phosphate serves as cofactor. As to expression, expressed during testis development in the outer part of the seminiferous tubules.

It carries out the reaction L-ornithine + H(+) = putrescine + CO2. It functions in the pathway amine and polyamine biosynthesis; putrescine biosynthesis via L-ornithine pathway; putrescine from L-ornithine: step 1/1. Its activity is regulated as follows. Inhibited by antizymes (AZs) OAZ1, OAZ2 and OAZ3 in response to polyamine levels. AZs inhibit the assembly of the functional homodimer by binding to ODC monomers. Additionally, OAZ1 targets ODC monomers for ubiquitin-independent proteolytic destruction by the 26S proteasome. Catalyzes the first and rate-limiting step of polyamine biosynthesis that converts ornithine into putrescine, which is the precursor for the polyamines, spermidine and spermine. Polyamines are essential for cell proliferation and are implicated in cellular processes, ranging from DNA replication to apoptosis. This Mus musculus (Mouse) protein is Ornithine decarboxylase (Odc1).